The chain runs to 72 residues: MKLLPLLFVILIVCAILPDEASCDQSELERKEENFKDESREIVKRSCKKECSGSRRTKKCMQKCNREHGHGR.

Residues 1–23 form the signal peptide; it reads MKLLPLLFVILIVCAILPDEASC. A propeptide spanning residues 24–43 is cleaved from the precursor; that stretch reads DQSELERKEENFKDESREIV. Cystine bridges form between C47/C64 and C51/C60. H70 carries the histidine amide modification.

Belongs to the short scorpion toxin superfamily. Potassium channel inhibitor kappa-KTx family. Kappa-KTx 5 subfamily. In terms of tissue distribution, expressed by the venom gland.

Its subcellular location is the secreted. In terms of biological role, weak blocker of potassium channels Kv1.1/KCNA1 (IC(50)=578.5 nM-9.9 uM) and Kv1.6/KCNA6 (~60% block at 30 uM of toxin). Acts by binding to the pore and occluding it. Has a voltage-dependent mode of action, which can be explained by a high content of basic residues causing repulsions at higher membrane voltages. Shows a weak interaction with muscle-type nicotinic acetylcholine receptors (nAChR), since it inhibits alpha-bungarotoxin binding to muscle-type nAChR from T.californica (IC(50)=1.4 uM). This suggests it probably weakly inhibits muscle nAChR. The mode of binding to potassium channels of this toxin differs from its homologs (including HefuTx1), since it lacks the key aromatic residue of the functional dyad. In contrast, its functionally important site is composed of a number of basic residues. The sequence is that of Potassium channel toxin kappa-KTx 5.1 from Heterometrus laoticus (Thai giant scorpion).